Consider the following 502-residue polypeptide: Lysine--tRNA ligase (502 aa).

2 residues coordinate Mg(2+): E412 and E419.

The protein belongs to the class-II aminoacyl-tRNA synthetase family. In terms of assembly, homodimer. It depends on Mg(2+) as a cofactor.

It is found in the cytoplasm. The catalysed reaction is tRNA(Lys) + L-lysine + ATP = L-lysyl-tRNA(Lys) + AMP + diphosphate. The sequence is that of Lysine--tRNA ligase from Histophilus somni (strain 2336) (Haemophilus somnus).